The sequence spans 221 residues: Orotate phosphoribosyltransferase (221 aa).

Lys26 lines the 5-phospho-alpha-D-ribose 1-diphosphate pocket. 34-35 provides a ligand contact to orotate; sequence FF. 5-phospho-alpha-D-ribose 1-diphosphate-binding positions include 72–73, Arg98, Lys99, Lys102, His104, and 123–131; these read YK and DDVISAGTS. Orotate-binding residues include Ser127 and Arg155.

It belongs to the purine/pyrimidine phosphoribosyltransferase family. PyrE subfamily. Homodimer. Mg(2+) is required as a cofactor.

The enzyme catalyses orotidine 5'-phosphate + diphosphate = orotate + 5-phospho-alpha-D-ribose 1-diphosphate. The protein operates within pyrimidine metabolism; UMP biosynthesis via de novo pathway; UMP from orotate: step 1/2. Functionally, catalyzes the transfer of a ribosyl phosphate group from 5-phosphoribose 1-diphosphate to orotate, leading to the formation of orotidine monophosphate (OMP). The polypeptide is Orotate phosphoribosyltransferase (Herminiimonas arsenicoxydans).